Consider the following 316-residue polypeptide: Sulfate adenylyltransferase subunit 2 (316 aa).

A disordered region spans residues 297 to 316; the sequence is RAIDRDQSGSMEKKKREGYF.

This sequence belongs to the PAPS reductase family. CysD subfamily. Heterodimer composed of CysD, the smaller subunit, and CysN.

The catalysed reaction is sulfate + ATP + H(+) = adenosine 5'-phosphosulfate + diphosphate. It participates in sulfur metabolism; hydrogen sulfide biosynthesis; sulfite from sulfate: step 1/3. Functionally, with CysN forms the ATP sulfurylase (ATPS) that catalyzes the adenylation of sulfate producing adenosine 5'-phosphosulfate (APS) and diphosphate, the first enzymatic step in sulfur assimilation pathway. APS synthesis involves the formation of a high-energy phosphoric-sulfuric acid anhydride bond driven by GTP hydrolysis by CysN coupled to ATP hydrolysis by CysD. The polypeptide is Sulfate adenylyltransferase subunit 2 (Allorhizobium ampelinum (strain ATCC BAA-846 / DSM 112012 / S4) (Agrobacterium vitis (strain S4))).